A 507-amino-acid chain; its full sequence is Arabinose import ATP-binding protein AraG (507 aa).

2 consecutive ABC transporter domains span residues 14–249 and 249–505; these read LRFN…MVGR and RDIQ…LPRT. Residue 46 to 53 participates in ATP binding; sequence GENGAGKS.

Belongs to the ABC transporter superfamily. Arabinose importer (TC 3.A.1.2.2) family. As to quaternary structure, the complex is composed of two ATP-binding proteins (AraG), two transmembrane proteins (AraH) and a solute-binding protein (AraF).

The protein resides in the cell inner membrane. The enzyme catalyses L-arabinose(out) + ATP + H2O = L-arabinose(in) + ADP + phosphate + H(+). Part of the ABC transporter complex AraFGH involved in arabinose import. Responsible for energy coupling to the transport system. This Pseudomonas syringae pv. syringae (strain B728a) protein is Arabinose import ATP-binding protein AraG.